The sequence spans 1401 residues: MSDLLGILKQQGQSEEFDAIKIALASPELIRSWSYGEVKKPETINYRTFKPERDGLFCAKTFGPVKDYECLCGKYKRLKHRGVICEKCGVELALAKVRRERMGHIELASPVAHIWFLKSLPSRIGLLLDMTLRDIERVLYFEAFVVVDPGMTELERGQLLNDEAYLDAMEQYGDEFDARMGAEAIRDLLRQIDLEDEIRNLREELPTTNSETKIKKITKRLKLLEAFYESGNKPEWMIMDVLPVLPPDLRPLVPLDGGRFATSDLNDLYRRVINRNNRLKRLLDLNAPDIIVRNEKRMLQESVDALLDNGRRGRAITGTNKRPLKSLADMIKGKQGRFRQNLLGKRVDYSGRSVIVVGPTLKLHQCGLPKKMALELFKPFIFSKLEFRGLATTIKAAKKMVEREESVVWDILDDVIREHPILLNRAPTLHRLGIQAFEPVLIEGKAIQLHPLVCTAYNADFDGDQMAVHVPLTLEAQLEARSLMMSTNNILSPASGEPIIVPSQDVVLGLYYLTREKVNALGEGKIYSSAQEAQNFYEAGHLDIHAKIKIRMPKEDGETGYHLVETTVGRAILAEILPKGMPFDYINRTMTKKVISKVIDSCYRKFGLKETVIFADQLMYTGFKYATRSGASIGIEDMEIPDDKASIIEHADNEVREIESQFRSGLVTNGERYNKVIDIWSRTNELVAKSMMSKIATEEVADAKGNKVRQESFNPIFMMADSGARGSAAQIRQLAGMRGLMAAPDGSIIETPITANFREGLNVFQYFISTHGARKGLADTALKTANSGYLTRRLVDVAQDVVITEDDCGTDTGILMQPLIEGGDIVEPLHERVLGRVVASDVYIPTQTEPVVKAGTLLDEEWVEKLEKHGVDQVMVRSPITCQTRFGLCAKCYGRDLARGHLVNTGEAVGIIAAQSIGEPGTQLTMRTFHIGGAASRATAANNIQIKTKGVIRLHNIKTVTHENKNLVAVSRSGEVTIVDEFGRERERYKVPYGAVISAQDNSPVEAGQVIATWDPHTHPVISEVSGRLKFVDLIDGITMNRQTDELTGLSNIVIIDAKQRSAAGRDLRPMVKLVTDEGDDIYLAGTNVPAQYYLPVDAIVNFEDRSLVGIGDVIARIPQERSKTRDITGGLPRVADLFEARKPKDSAVMAEVSGLVNFGKETKGKRRLIINVSEDQCHEELIPKWRHISVFEGEHVERGEIIAEGALNPHDILRLLGVGALANYIVNEVQDVYRLQGVKINDKHIEVIVRQMLRKRVITFAGDSKFLVGEQVEESAMLQENDKLLAEGKQIARGTPILLGITKASLATESFISAASFQETTRVLTEAAVSGKVDELRGLKENVMVGRLIPAGTGYTYHQSRKAKRARVAAGGDSSATHTVTASDVEHALSEALNADNHEH.

Zn(2+)-binding residues include Cys-70, Cys-72, Cys-85, and Cys-88. Residues Asp-460, Asp-462, and Asp-464 each coordinate Mg(2+). Residues Cys-808, Cys-882, Cys-889, and Cys-892 each contribute to the Zn(2+) site.

This sequence belongs to the RNA polymerase beta' chain family. As to quaternary structure, the RNAP catalytic core consists of 2 alpha, 1 beta, 1 beta' and 1 omega subunit. When a sigma factor is associated with the core the holoenzyme is formed, which can initiate transcription. Mg(2+) is required as a cofactor. Requires Zn(2+) as cofactor.

It carries out the reaction RNA(n) + a ribonucleoside 5'-triphosphate = RNA(n+1) + diphosphate. DNA-dependent RNA polymerase catalyzes the transcription of DNA into RNA using the four ribonucleoside triphosphates as substrates. This is DNA-directed RNA polymerase subunit beta' from Legionella pneumophila (strain Lens).